A 548-amino-acid chain; its full sequence is MYEEEIKKIALLNAYQHNGKAELKSVIGKVMAEIADLRKNPKLVSELAKAAVDSVNSMSKDDIVNIVEKQFPEALKKDKKPEEHRLPDLQGVNGHVVMRLAPSPSGPLHIGHTRMAILNDEYVKRYGGDLILRIEDTNPTNIDPEAYAMIPEDLEWLGVNVTKTVIQSERFDLYYSVAKKLIENGHLYICTCDREEFKRKKLASIPCKDRDNPPETNLYLFEKMLDGEIKAGAAVAVMKTDLNHPNPSVRDWIAFRIIDAKHPRTGDKYRVFPMMSFSVAVDDHYLGLTHVLRGKDQLTNTEKQRYVFEYNGWNKPYYYHYGMIRFPGTRLKTSLMKKGIQAGQYDGWSDVRLGTVRAMARRGYQPETFRRYWINSGLREIDAVFSWEIFNSLNREFVDPKAYRFSFTKDPVEIKMEGSNGLTARLPYHPSHPEYGVRKYEIGDTVYISKGDADKIADGERFRLKDLCYVVRKGDRFLFDGTEMKEKTKIINWCPPNSREFQVLKPDGSIDKGLIEPASKGYRGISQLERYGYVNFYDSDEKAYFTHD.

The 'HIGH' region motif lies at 102–112 (PSPSGPLHIGH).

It belongs to the class-I aminoacyl-tRNA synthetase family. Glutamate--tRNA ligase type 2 subfamily.

It is found in the cytoplasm. The enzyme catalyses tRNA(Glu) + L-glutamate + ATP = L-glutamyl-tRNA(Glu) + AMP + diphosphate. Functionally, catalyzes the attachment of glutamate to tRNA(Glu) in a two-step reaction: glutamate is first activated by ATP to form Glu-AMP and then transferred to the acceptor end of tRNA(Glu). In Thermoplasma volcanium (strain ATCC 51530 / DSM 4299 / JCM 9571 / NBRC 15438 / GSS1), this protein is Glutamate--tRNA ligase.